The sequence spans 492 residues: V-type proton ATPase subunit B 2 (492 aa).

The protein belongs to the ATPase alpha/beta chains family. In terms of assembly, V-ATPase is a heteromultimeric enzyme composed of a peripheral catalytic V1 complex (main components: subunits A, B, C, D, E, and F) attached to an integral membrane V0 proton pore complex (main component: the proteolipid protein).

Its function is as follows. Non-catalytic subunit of the peripheral V1 complex of vacuolar ATPase. V-ATPase is responsible for acidifying a variety of intracellular compartments in eukaryotic cells. In Acetabularia acetabulum (Mermaid's wine glass), this protein is V-type proton ATPase subunit B 2.